Here is a 520-residue protein sequence, read N- to C-terminus: Ubiquitin carboxyl-terminal hydrolase 3 (520 aa).

M1 is modified (N-acetylmethionine). The UBP-type zinc finger occupies 1–121 (MECPHLSSSV…QKVREHLQNL (121 aa)). Positions 3, 5, 29, 32, 41, 44, 49, 56, 60, 82, 95, and 98 each coordinate Zn(2+). Residues 159 to 511 (TGLRNLGNTC…KAYILFYVEH (353 aa)) form the USP domain. The Nucleophile role is filled by C168. Residue H471 is the Proton acceptor of the active site.

The protein belongs to the peptidase C19 family. USP3 subfamily. As to quaternary structure, interacts (via UBP-type domain) with H2A; the interaction is less efficient than with monoubiquitinated H2A. As to expression, expressed in all tissues examined, with strongest expression in pancreas.

The protein localises to the nucleus. It is found in the cytoplasm. The enzyme catalyses Thiol-dependent hydrolysis of ester, thioester, amide, peptide and isopeptide bonds formed by the C-terminal Gly of ubiquitin (a 76-residue protein attached to proteins as an intracellular targeting signal).. Its function is as follows. Deubiquitinase that plays a role in several cellular processes including transcriptional regulation, cell cycle progression or innate immunity. In response to DNA damage, deubiquitinates monoubiquitinated target proteins such as histone H2A and H2AX and thereby counteracts RNF168- and RNF8-mediated ubiquitination. In turn, participates in the recruitment of DNA damage repair factors to DNA break sites. Required for proper progression through S phase and subsequent mitotic entry. Acts as a positive regulator of TP53 by deubiquitinating and stabilizing it to promote normal cell proliferation and transformation. Participates in establishing tolerance innate immune memory through non-transcriptional feedback. Mechanistically, negatively regulates TLR-induced NF-kappa-B signaling by targeting and removing the 'Lys-63'-linked polyubiquitin chains on MYD88. Negatively regulates the activation of type I interferon signaling by mediating 'Lys-63'-linked polyubiquitin chains on RIGI and IFIH1. Also deubiquinates ASC/PYCARD, the central adapter mediating the assembly and activation of most inflammasomes, and thereby promotes inflammasome activation. The chain is Ubiquitin carboxyl-terminal hydrolase 3 (USP3) from Homo sapiens (Human).